Reading from the N-terminus, the 292-residue chain is 4-diphosphocytidyl-2-C-methyl-D-erythritol kinase (292 aa).

Lys20 is an active-site residue. 103–113 (PMGGGIGGGSS) is an ATP binding site. Residue Asp145 is part of the active site.

It belongs to the GHMP kinase family. IspE subfamily.

It carries out the reaction 4-CDP-2-C-methyl-D-erythritol + ATP = 4-CDP-2-C-methyl-D-erythritol 2-phosphate + ADP + H(+). The protein operates within isoprenoid biosynthesis; isopentenyl diphosphate biosynthesis via DXP pathway; isopentenyl diphosphate from 1-deoxy-D-xylulose 5-phosphate: step 3/6. Functionally, catalyzes the phosphorylation of the position 2 hydroxy group of 4-diphosphocytidyl-2C-methyl-D-erythritol. The protein is 4-diphosphocytidyl-2-C-methyl-D-erythritol kinase of Cupriavidus taiwanensis (strain DSM 17343 / BCRC 17206 / CCUG 44338 / CIP 107171 / LMG 19424 / R1) (Ralstonia taiwanensis (strain LMG 19424)).